The sequence spans 280 residues: Fructose-1,6-bisphosphatase class 1 (280 aa).

Positions 64, 83, 85, and 86 each coordinate Mg(2+). Residues 86-89, Y189, and K220 each bind substrate; that span reads DGSS. E226 contacts Mg(2+).

It belongs to the FBPase class 1 family. As to quaternary structure, homotetramer. Mg(2+) serves as cofactor.

It is found in the cytoplasm. It carries out the reaction beta-D-fructose 1,6-bisphosphate + H2O = beta-D-fructose 6-phosphate + phosphate. Its pathway is carbohydrate biosynthesis; gluconeogenesis. The sequence is that of Fructose-1,6-bisphosphatase class 1 from Campylobacter jejuni (strain RM1221).